A 626-amino-acid polypeptide reads, in one-letter code: Probable potassium transport system protein Kup (626 aa).

The next 13 membrane-spanning stretches (helical) occupy residues 8–28 (VALP…IGTS), 44–64 (ISEA…TLSI), 102–122 (IYLI…GIIT), 139–159 (PAFD…LFMV), 171–191 (FGPI…YSII), 196–216 (ILWF…PFVA), 217–237 (FVAM…YADM), 249–269 (WFIV…ALLL), 281–301 (LLVP…AAVI), 339–359 (IYVP…IILF), 377–397 (MLCV…WPWW), 399–419 (VTLF…STSL), and 421–441 (ILSG…ILMT).

Belongs to the HAK/KUP transporter (TC 2.A.72) family.

Its subcellular location is the cell inner membrane. It carries out the reaction K(+)(in) + H(+)(in) = K(+)(out) + H(+)(out). In terms of biological role, transport of potassium into the cell. Likely operates as a K(+):H(+) symporter. The protein is Probable potassium transport system protein Kup of Acinetobacter baylyi (strain ATCC 33305 / BD413 / ADP1).